Consider the following 460-residue polypeptide: Proline--tRNA ligase (460 aa).

The protein belongs to the class-II aminoacyl-tRNA synthetase family. ProS type 3 subfamily. Homodimer.

The protein resides in the cytoplasm. The enzyme catalyses tRNA(Pro) + L-proline + ATP = L-prolyl-tRNA(Pro) + AMP + diphosphate. Functionally, catalyzes the attachment of proline to tRNA(Pro) in a two-step reaction: proline is first activated by ATP to form Pro-AMP and then transferred to the acceptor end of tRNA(Pro). The chain is Proline--tRNA ligase from Methanococcus maripaludis (strain C5 / ATCC BAA-1333).